A 423-amino-acid chain; its full sequence is NDP-N-acetyl-D-galactosaminuronic acid dehydrogenase (423 aa).

11–28 (TISVVGLGYIGLPTATVL) contributes to the NAD(+) binding site. K218 acts as the Proton donor/acceptor in catalysis. The Nucleophile role is filled by C272.

This sequence belongs to the UDP-glucose/GDP-mannose dehydrogenase family.

Its function is as follows. Probably involved in the synthesis of sugar components of EPS I, by converting NDP-N-acetyl-D-galactosamine into NDP-N-acetyl-D-galactosaminuronic acid. The sequence is that of NDP-N-acetyl-D-galactosaminuronic acid dehydrogenase (epsD) from Ralstonia nicotianae (strain ATCC BAA-1114 / GMI1000) (Ralstonia solanacearum).